Here is a 149-residue protein sequence, read N- to C-terminus: Large ribosomal subunit protein bL9 (149 aa).

The protein belongs to the bacterial ribosomal protein bL9 family.

Binds to the 23S rRNA. This chain is Large ribosomal subunit protein bL9, found in Mycoplasma pneumoniae (strain ATCC 29342 / M129 / Subtype 1) (Mycoplasmoides pneumoniae).